The chain runs to 296 residues: Fructose-bisphosphate aldolase class 1 (296 aa).

Glu-175 serves as the catalytic Proton acceptor. The active-site Schiff-base intermediate with dihydroxyacetone-P is the Lys-212.

This sequence belongs to the class I fructose-bisphosphate aldolase family.

It carries out the reaction beta-D-fructose 1,6-bisphosphate = D-glyceraldehyde 3-phosphate + dihydroxyacetone phosphate. Its pathway is carbohydrate degradation; glycolysis; D-glyceraldehyde 3-phosphate and glycerone phosphate from D-glucose: step 4/4. In Staphylococcus epidermidis (strain ATCC 35984 / DSM 28319 / BCRC 17069 / CCUG 31568 / BM 3577 / RP62A), this protein is Fructose-bisphosphate aldolase class 1.